A 186-amino-acid polypeptide reads, in one-letter code: Elongation factor P (186 aa).

It belongs to the elongation factor P family.

It is found in the cytoplasm. It participates in protein biosynthesis; polypeptide chain elongation. Involved in peptide bond synthesis. Stimulates efficient translation and peptide-bond synthesis on native or reconstituted 70S ribosomes in vitro. Probably functions indirectly by altering the affinity of the ribosome for aminoacyl-tRNA, thus increasing their reactivity as acceptors for peptidyl transferase. The polypeptide is Elongation factor P (Streptococcus mutans serotype c (strain ATCC 700610 / UA159)).